A 429-amino-acid chain; its full sequence is MTLQKPKGTQDILPQETVKWQYVENVARKTFKKYHYGEIRTPMFERYEVISRSVGDTTDIVTKEMYDFHDKGDRHITLRPEGTAPVVRSYVENKLFAPEVQKPVKVFYIGSMFRYERPQAGRLREFHQLGVECFGSNNPAIDAETIAMAYQLFNELGIKDVTLHLNSLGNKESRKAYRQALIDYLIPMKDKLSKDSQRRLEENPLRVLDSKEKEDKEAVENAPSILDYLDDDSQAHFQGVRDMLEVLDIPYVIDTNMVRGLDYYNHTIFEFITQVDKSELTLCAGGRYDSLVEYFGGPATAGFGFGLGLERLLLVIDKQKINLPVDNSLDVYIAVLGAAANSTALELIQAIRKQGFSAERDYLSRKIKAQFKSADVFKTKLIMTLGESEVETGQVAVKNNFTRQEIAVSFEEIKTDFASVFKQLGSDRP.

The protein belongs to the class-II aminoacyl-tRNA synthetase family. In terms of assembly, homodimer.

The protein localises to the cytoplasm. It carries out the reaction tRNA(His) + L-histidine + ATP = L-histidyl-tRNA(His) + AMP + diphosphate + H(+). This Streptococcus mutans serotype c (strain ATCC 700610 / UA159) protein is Histidine--tRNA ligase.